Reading from the N-terminus, the 454-residue chain is NADP-specific glutamate dehydrogenase 1 (454 aa).

Residue K110 is part of the active site. Residue 174–203 (GVLTGKGLNWGGSLIRPEATGYGLVYYTQA) participates in NAD(+) binding.

This sequence belongs to the Glu/Leu/Phe/Val dehydrogenases family. As to quaternary structure, homohexamer.

The enzyme catalyses L-glutamate + NADP(+) + H2O = 2-oxoglutarate + NH4(+) + NADPH + H(+). This chain is NADP-specific glutamate dehydrogenase 1 (GDH1), found in Saccharomyces uvarum (strain ATCC 76518 / CBS 7001 / CLIB 283 / NBRC 10550 / MCYC 623 / NCYC 2669 / NRRL Y-11845) (Yeast).